The chain runs to 525 residues: MEAPTLSELEGLRYSELQKLAKTAGLKANLKADKLLKALKVHFYPESKDESPDYDGGSSLTDTDELNSSQEKDEPVSVSFVTHRRGRGRKPLKNYDTPKDEFLTVSVGTGTESLASETDNTQDQNCLESKKKKVSPPTIDNKHRKRSRSEDTSKQNNSETTEKRQKKASDITSVPSAGKIPRYAGRLSKPESKPSTPNFKKLHEAHFKKMESIDKYMERKQKRLDTVSSSIQEMKMLTKKSNLLKLVEKTPVSDIKKPVKSRLSLLSSLPPTTGASPSRTPTNQRRSGRFSAANKSILFDRSGFKPSVLSSSKMNVRFSEATKDNEHKRSLIKTPARKSSSFLAITPESEPRQMLPNVKKTPARKSLSVLAVTPESEPKQMLPSVKKNEPMATPEKAKKTDLNTTIQPSTVILESTCPQNKEIAITPFKFTAQTTETPNTNKKGRFDLQASLSRPLGYQPHKGKLKPWGGSEENKCGSNNNVSVLKNNFKQPHLQTREDRRKQHEQDRKGKRDQTLGTRRGVPVQ.

4 disordered regions span residues 46 to 205 (ESKD…LHEA), 248 to 292 (EKTP…RFSA), 373 to 397 (TPES…PEKA), and 451 to 525 (SLSR…VPVQ). Positions 58–69 (SSLTDTDELNSS) are enriched in polar residues. Residues 82-92 (THRRGRGRKPL) are compositionally biased toward basic residues. Polar residues predominate over residues 106-127 (SVGTGTESLASETDNTQDQNCL). A compositionally biased stretch (basic and acidic residues) spans 160-169 (TTEKRQKKAS). The span at 270–285 (PPTTGASPSRTPTNQR) shows a compositional bias: polar residues. Residues 476–494 (CGSNNNVSVLKNNFKQPHL) show a composition bias toward polar residues. Over residues 495–514 (QTREDRRKQHEQDRKGKRDQ) the composition is skewed to basic and acidic residues.

This sequence belongs to the NUSAP family. As to quaternary structure, interacts with DNA. Interacts with microtubules, ipo7, kpna2 and kpnb1. Microtubule stabilization is inhibited by ipo7 and kpna2, while microtubule bundling is inhibited by kpnb1. Active GTP-bound ran causes dissociation of ipo7 and kpnb1.

It is found in the cytoplasm. The protein resides in the nucleus. Its subcellular location is the cytoskeleton. The protein localises to the spindle. Functionally, microtubule-associated protein with the capacity to bundle and stabilize microtubules. May associate with chromosomes and promote the organization of meiotic or mitotic spindle microtubules around them. This Xenopus laevis (African clawed frog) protein is Nucleolar and spindle-associated protein 1-A (nusap1-a).